The primary structure comprises 299 residues: MTTDSAKDSRTMDFLLVTGLSGAGLSTAAKVLEDLGWYVADNLPPELISRMVGLSLTSDPPVDRLAVVIDVRSRLFTGDLGWVLTELEAEPIHTRVLYLEASDDVLIRRFEQVRRSHPLQNDGIDGTLSEGIAAERRQLAVVKAAADLVIDTSALKAHQLRQKIETAFGNDANRTMKVTVQSFGFKYGLPMDADLVCDVRFLPNPHWIPELRPHTGQDADVRDYVLSREGAEDYLDTYRHLVDLTIAGYRREGKRYMTIAVGCTGGKHRSVAMSEALARRLGSEDDISVSIVHRDLGRE.

19–26 (GLSGAGLS) provides a ligand contact to ATP. 70–73 (DVRS) is a binding site for GTP.

The protein belongs to the RapZ-like family.

In terms of biological role, displays ATPase and GTPase activities. In Rhodococcus erythropolis (strain PR4 / NBRC 100887), this protein is Nucleotide-binding protein RER_30260.